Reading from the N-terminus, the 642-residue chain is A-kinase anchor protein 8-like (642 aa).

Residues 1-269 (MSYTGFVQGS…MRRTWKTWTT (269 aa)) form a sufficient for activation of CTE-mediated expression region. Residue R209 is modified to Asymmetric dimethylarginine; alternate. The residue at position 209 (R209) is an Omega-N-methylarginine; alternate. Residues R218, R238, and R248 each carry the omega-N-methylarginine modification. An N6-acetyllysine modification is found at K258. The tract at residues 265 to 382 (KTWTTADFRT…QDKQKKRQRD (118 aa)) is disordered. Residue T268 is modified to Phosphothreonine. A Nuclear localization signal motif is present at residues 275–280 (KKKKRK). Positions 281–297 (QGGSPDEPDSKATRTDC) match the Nuclear export signal (NES) motif. Position 284 is a phosphoserine (S284). Residues 288 to 297 (PDSKATRTDC) are compositionally biased toward basic and acidic residues. T293 carries the post-translational modification Phosphothreonine. At S298 the chain carries Phosphoserine. Acidic residues predominate over residues 299–315 (DNSDSDNDEGTEGEAAE). Over residues 338 to 350 (EDGREEGKEDPEK) the composition is skewed to basic and acidic residues. Residues 363–365 (KRK) carry the Nuclear localization signal motif. 2 C2H2 AKAP95-type zinc fingers span residues 392 to 414 (CSLC…SKFH) and 485 to 508 (CAAC…TMDH). Residues 546–642 (GENPFTDNPE…EDDEEGGGGP (97 aa)) form a disordered region. Positions 553-564 (NPEEEKEQDEVE) are enriched in acidic residues. Residues 585–605 (AQPPVPLEPAPGTTTPPPPPP) show a composition bias toward pro residues. A compositionally biased stretch (acidic residues) spans 631–642 (DMEDDEEGGGGP).

The protein belongs to the AKAP95 family. As to quaternary structure, interacts (via N-terminus) with DHX9 (via RGG region). Interacts with TMPO isoform Beta, PRPF40A, RNF43, lamin-B. Interacts with HDAC3; increased during mitosis. Phosphorylated on serine or threonine residues possibly by PKA.

The protein localises to the nucleus. Its subcellular location is the nucleus matrix. The protein resides in the nucleus speckle. It is found in the PML body. It localises to the cytoplasm. Functionally, could play a role in constitutive transport element (CTE)-mediated gene expression by association with DHX9. Increases CTE-dependent nuclear unspliced mRNA export. Proposed to target PRKACA to the nucleus but does not seem to be implicated in the binding of regulatory subunit II of PKA. May be involved in nuclear envelope breakdown and chromatin condensation. May be involved in anchoring nuclear membranes to chromatin in interphase and in releasing membranes from chromating at mitosis. May regulate the initiation phase of DNA replication when associated with TMPO isoform Beta. Required for cell cycle G2/M transition and histone deacetylation during mitosis. In mitotic cells recruits HDAC3 to the vicinity of chromatin leading to deacetylation and subsequent phosphorylation at 'Ser-10' of histone H3; in this function seems to act redundantly with AKAP8. May be involved in regulation of pre-mRNA splicing. The polypeptide is A-kinase anchor protein 8-like (Akap8l) (Mus musculus (Mouse)).